A 169-amino-acid polypeptide reads, in one-letter code: Putative glycine cleavage system H protein, mitochondrial (169 aa).

Positions 60-142 constitute a Lipoyl-binding domain; it reads VGTVGITSYA…EEEGWICKIK (83 aa). An N6-lipoyllysine modification is found at lysine 101. Serine 131 carries the post-translational modification Phosphoserine.

This sequence belongs to the GcvH family. In terms of assembly, component of the glycine decarboxylase complex (GDC), which is composed of four proteins: P, T, L and H. Requires (R)-lipoate as cofactor.

The protein localises to the mitochondrion. The glycine cleavage system (glycine decarboxylase complex) catalyzes the degradation of glycine. The H protein shuttles the methylamine group of glycine from the P protein to the T protein. The chain is Putative glycine cleavage system H protein, mitochondrial (gcv3) from Schizosaccharomyces pombe (strain 972 / ATCC 24843) (Fission yeast).